Here is a 402-residue protein sequence, read N- to C-terminus: Putative RNA-guided DNA endonuclease InsQ (402 aa).

Active-site residues include Asp-183 and Glu-267. The Zn(2+) site is built by Cys-334, Cys-337, Cys-353, and Cys-356. Asp-363 is a catalytic residue.

In the N-terminal section; belongs to the transposase 2 family. It in the C-terminal section; belongs to the transposase 35 family.

An RNA-guided dsDNA endonuclease. When guided by an RNA derived from the right-end element of its insertion sequence element (IS), cleaves DNA downstream of the transposon-associated motif (TAM). Cleaves supercoiled and linear DNA in a staggered manner 15-21 bases from the TAM yielding 5'-overhangs. Binds reRNA, an approximately 150 nucleotide base sRNA derived from the 3' end of its own gene, the right end (RE) of the insertion sequence (IS) plus sequence downstream of the IS. In terms of biological role, not required for transposition of the insertion element. The corresponding transposase in strains MG1655 and W3110 is a truncated pseudogene (yncK). This Escherichia coli (strain K12) protein is Putative RNA-guided DNA endonuclease InsQ (insQ).